The sequence spans 116 residues: Large ribosomal subunit protein uL18 (116 aa).

It belongs to the universal ribosomal protein uL18 family. In terms of assembly, part of the 50S ribosomal subunit; part of the 5S rRNA/L5/L18/L25 subcomplex. Contacts the 5S and 23S rRNAs.

This is one of the proteins that bind and probably mediate the attachment of the 5S RNA into the large ribosomal subunit, where it forms part of the central protuberance. The polypeptide is Large ribosomal subunit protein uL18 (Psychromonas ingrahamii (strain DSM 17664 / CCUG 51855 / 37)).